A 695-amino-acid chain; its full sequence is uncharacterized protein (695 aa).

This is an uncharacterized protein from Xanthomonas campestris pv. campestris (strain B100).